Reading from the N-terminus, the 450-residue chain is Phosphoglucosamine mutase (450 aa).

The active-site Phosphoserine intermediate is the serine 101. Mg(2+)-binding residues include serine 101, aspartate 242, aspartate 244, and aspartate 246. Phosphoserine is present on serine 101.

It belongs to the phosphohexose mutase family. It depends on Mg(2+) as a cofactor. In terms of processing, activated by phosphorylation.

The catalysed reaction is alpha-D-glucosamine 1-phosphate = D-glucosamine 6-phosphate. Functionally, catalyzes the conversion of glucosamine-6-phosphate to glucosamine-1-phosphate. The chain is Phosphoglucosamine mutase from Rhodopseudomonas palustris (strain ATCC BAA-98 / CGA009).